A 1577-amino-acid polypeptide reads, in one-letter code: Dynamin-binding protein (1577 aa).

Position 1 is an N-acetylmethionine (M1). SH3 domains lie at 2-61 (EPGS…IVTI), 66-126 (EGER…ELCL), and 145-204 (YSMG…LLGP). Residues 209–242 (DESVNAGSGDDSTLNDEVDVSPEEVESEGDEDDQ) form a disordered region. The segment covering 221–242 (TLNDEVDVSPEEVESEGDEDDQ) has biased composition (acidic residues). Residues 243 to 302 (QAGTYGIALYRFQALESNELDFEVGDKIRILGTLEDGWLEGRLKGKTGIFPHRFVKLCPS) form the SH3 4 domain. 2 disordered regions span residues 307 to 361 (ETMA…EEPL) and 375 to 437 (GQDE…SRQC). Polar residues predominate over residues 400 to 410 (PDLSQEVNGIS). Position 494 is a phosphoserine (S494). 2 disordered regions span residues 519 to 547 (PERP…DNLD) and 590 to 681 (RGSS…SEYT). Low complexity predominate over residues 617–626 (TPTSTSPHLL). Residues 632–651 (KPGPPLVVRPSRPAPLPPPT) are compositionally biased toward pro residues. The span at 652–662 (QQRLNTASPKP) shows a compositional bias: polar residues. Residues 672 to 681 (APEKEGSEYT) are compositionally biased toward basic and acidic residues. S684 is subject to Phosphoserine. Residues 705 to 755 (LDMHTRAQEELNLLLEEKQDESLRAETLETLKSYESTIQSLNLELQQLREM) adopt a coiled-coil conformation. The region spanning 784–967 (KRAKVVAELL…KEINANINEY (184 aa)) is the DH domain. One can recognise a BAR domain in the interval 1008–1217 (LKHLTGFAPQ…LKASDREGNL (210 aa)). In terms of domain architecture, SH3 5 spans 1285–1348 (PPEKLFHVQR…YSSFLKPYNP (64 aa)). Over residues 1353–1375 (SDSSVVSHSSTESEHSGSSPSFH) the composition is skewed to low complexity. 2 disordered regions span residues 1353-1381 (SDSS…NSSS) and 1415-1510 (ETLG…LGSS). Polar residues-rich tracts occupy residues 1418–1428 (GVSSNTGNPET) and 1484–1497 (DQGS…SRAC). Residues 1513 to 1576 (EGNQVYFAIY…PSNYIRKTEY (64 aa)) form the SH3 6 domain.

In terms of assembly, binds DNM1 via its N-terminal SH3 domains. The C-terminal SH3 domain binds a complex containing actin, tubulin, Hsp70 and actin-regulatory proteins, such as ENAH, EVL, WIRE, CR16, WAVE1 and NAP1L1. Interacts with FASLG. Interacts (via SH3 domain 6) with WASL. Interacts (via SH3 domain 6) interacts with ENAH. Interacts (via C-terminal domain) with TJP1; required for the apical cell-cell junction localization of DNMBP. As to expression, widely expressed.

The protein localises to the cytoplasm. Its subcellular location is the golgi apparatus. The protein resides in the golgi stack. It is found in the cytoskeleton. It localises to the synapse. The protein localises to the cell junction. Its function is as follows. Plays a critical role as a guanine nucleotide exchange factor (GEF) for CDC42 in several intracellular processes associated with the actin and microtubule cytoskeleton. Regulates the structure of apical junctions in epithelial cells. Participates in the normal lumenogenesis of epithelial cell cysts by regulating spindle orientation. Plays a role in ciliogenesis. May play a role in membrane trafficking between the cell surface and the Golgi. In Rattus norvegicus (Rat), this protein is Dynamin-binding protein.